Consider the following 145-residue polypeptide: D-aminoacyl-tRNA deacylase (145 aa).

The Gly-cisPro motif, important for rejection of L-amino acids signature appears at 137–138; that stretch reads GP.

This sequence belongs to the DTD family. As to quaternary structure, homodimer.

The protein localises to the cytoplasm. The enzyme catalyses glycyl-tRNA(Ala) + H2O = tRNA(Ala) + glycine + H(+). It carries out the reaction a D-aminoacyl-tRNA + H2O = a tRNA + a D-alpha-amino acid + H(+). Its function is as follows. An aminoacyl-tRNA editing enzyme that deacylates mischarged D-aminoacyl-tRNAs. Also deacylates mischarged glycyl-tRNA(Ala), protecting cells against glycine mischarging by AlaRS. Acts via tRNA-based rather than protein-based catalysis; rejects L-amino acids rather than detecting D-amino acids in the active site. By recycling D-aminoacyl-tRNA to D-amino acids and free tRNA molecules, this enzyme counteracts the toxicity associated with the formation of D-aminoacyl-tRNA entities in vivo and helps enforce protein L-homochirality. The sequence is that of D-aminoacyl-tRNA deacylase from Pseudomonas paraeruginosa (strain DSM 24068 / PA7) (Pseudomonas aeruginosa (strain PA7)).